Consider the following 42-residue polypeptide: uncharacterized protein (42 aa).

This is an uncharacterized protein from Musa (BBTV).